A 230-amino-acid polypeptide reads, in one-letter code: uncharacterized protein (230 aa).

3 residues coordinate a divalent metal cation: E74, E76, and D105.

It belongs to the FAH family.

This is an uncharacterized protein from Pyrococcus horikoshii (strain ATCC 700860 / DSM 12428 / JCM 9974 / NBRC 100139 / OT-3).